The chain runs to 140 residues: Nucleoside diphosphate kinase (140 aa).

6 residues coordinate ATP: Lys-11, Phe-59, Arg-87, Thr-93, Arg-104, and Asn-114. His-117 (pros-phosphohistidine intermediate) is an active-site residue.

Belongs to the NDK family. In terms of assembly, homotetramer. The cofactor is Mg(2+).

It is found in the cytoplasm. It carries out the reaction a 2'-deoxyribonucleoside 5'-diphosphate + ATP = a 2'-deoxyribonucleoside 5'-triphosphate + ADP. The catalysed reaction is a ribonucleoside 5'-diphosphate + ATP = a ribonucleoside 5'-triphosphate + ADP. Its function is as follows. Major role in the synthesis of nucleoside triphosphates other than ATP. The ATP gamma phosphate is transferred to the NDP beta phosphate via a ping-pong mechanism, using a phosphorylated active-site intermediate. This is Nucleoside diphosphate kinase from Rhizobium etli (strain CIAT 652).